The primary structure comprises 713 residues: Low-density lipoprotein receptor-related protein 10 (713 aa).

The first 17 residues, 1–17, serve as a signal peptide directing secretion; that stretch reads MLSALPLLFLLLGGALA. Over 18–441 the chain is Extracellular; the sequence is RPDRITFPRS…WDCSYALPRK (424 aa). Cystine bridges form between Cys-29–Cys-58 and Cys-81–Cys-99. Residues 29–137 form the CUB 1 domain; the sequence is CEAPPAVLSE…QGFLLTYSQD (109 aa). N-linked (GlcNAc...) asparagine glycosylation is present at Asn-57. A glycan (N-linked (GlcNAc...) asparagine) is linked at Asn-112. The 37-residue stretch at 140 to 176 folds into the LDL-receptor class A 1 domain; sequence LCLQEEFQCLNHRCIPAAQRCDGIDACGDGSDEAGCS. Cystine bridges form between Cys-141–Cys-153, Cys-148–Cys-166, Cys-160–Cys-175, and Cys-193–Cys-221. A CUB 2 domain is found at 193–306; sequence CNLTLEDFYG…RGFNATYHVR (114 aa). Residues Asn-194 and Asn-300 are each glycosylated (N-linked (GlcNAc...) asparagine). 3 LDL-receptor class A domains span residues 308–355, 356–398, and 399–435; these read YCLP…EGCP, GCPP…RRCR, and HCQP…WDCS. 9 disulfides stabilise this stretch: Cys-309–Cys-332, Cys-316–Cys-345, Cys-339–Cys-354, Cys-357–Cys-375, Cys-364–Cys-388, Cys-382–Cys-397, Cys-400–Cys-412, Cys-407–Cys-425, and Cys-419–Cys-434. Residues 442-462 traverse the membrane as a helical segment; the sequence is VITAAVIGSLVCGLLLVIALG. The Cytoplasmic segment spans residues 463–713; the sequence is CTCKLYAIRT…VEAEDEPLLA (251 aa). Residues 566–636 are disordered; the sequence is LLPRTNTPAR…TLPALATVSE (71 aa). Thr-596 is subject to Phosphothreonine. Residues 614–626 show a composition bias toward pro residues; the sequence is PPLPIKTPIPTPS.

It belongs to the LDLR family. As to expression, highly expressed in heart, lung, liver and liver. Expressed at low level in brain and spleen. Weakly or not expressed in testis and skeletal muscle. In liver, it is expressed in hepatocytes and at higher level in sinusoidal lining. In the kidney, it is expressed in peritubular capillaries. In brain, it is expressed in the epithelium of the choroid plexus ependymal cells of the third ventricle pia matter, and to lesser extent in hippocampal fields CA2 and CA3.

The protein localises to the membrane. The protein resides in the coated pit. Its function is as follows. Probable receptor, which is involved in the internalization of lipophilic molecules and/or signal transduction. May be involved in the uptake of lipoprotein APOE in liver. The protein is Low-density lipoprotein receptor-related protein 10 (Lrp10) of Mus musculus (Mouse).